Reading from the N-terminus, the 666-residue chain is Mitogen-activated protein kinase kinase kinase ANP1 (666 aa).

A Protein kinase domain is found at 69–331; sequence WRKGQLIGRG…ASELLKHPFV (263 aa). ATP is bound by residues 75 to 83 and lysine 98; that span reads IGRGAFGTV. The stretch at 101–131 forms a coiled coil; the sequence is LIAANFASKEKTQAHIQELEEEVKLLKNLSH. Glycyl lysine isopeptide (Lys-Gly) (interchain with G-Cter in ubiquitin) cross-links involve residues lysine 109 and lysine 111. Aspartate 197 serves as the catalytic Proton acceptor. The segment covering 452–464 has biased composition (basic and acidic residues); it reads KFDESPGNGEKES. Disordered regions lie at residues 452-481, 536-592, and 635-666; these read KFDE…DDDE, GFLK…DGVS, and QEIM…SPGK. The segment covering 538 to 558 has biased composition (low complexity); that stretch reads LKLPPKSRSPSRGPLGGSPSR. Positions 560 to 569 are enriched in polar residues; sequence TDATSCSKSP. Residues 620–643 adopt a coiled-coil conformation; the sequence is KKWKEELDQELERKRQEIMRQAGL. Basic and acidic residues predominate over residues 647–660; the sequence is PRDRGMSRQREKSR.

The protein belongs to the protein kinase superfamily. STE Ser/Thr protein kinase family. MAP kinase kinase kinase subfamily. Expressed in roots, inflorescence stems, flower buds and flowers. Low amount in rosette and cauline leaves.

It catalyses the reaction L-seryl-[protein] + ATP = O-phospho-L-seryl-[protein] + ADP + H(+). The enzyme catalyses L-threonyl-[protein] + ATP = O-phospho-L-threonyl-[protein] + ADP + H(+). In terms of biological role, may be involved in an oxidative stress-mediated signaling cascade that phosphorylates downstream MAP kinases MPK3 and MPK6. May suppress auxin signaling that promotes cell cycle. Functionally redundant to ANP2 and ANP3 in the positive regulation of cytokinesis. In Arabidopsis thaliana (Mouse-ear cress), this protein is Mitogen-activated protein kinase kinase kinase ANP1 (ANP1).